The sequence spans 356 residues: HORMA domain-containing protein 1 (356 aa).

The HORMA domain occupies 24–225 (QQSLVLVKKL…TPFHSIKMNV (202 aa)). Disordered regions lie at residues 282–305 (ETQE…PKMD) and 333–356 (QLEF…SVPK). Basic and acidic residues predominate over residues 288–298 (EQPHRHTKEDF). Residues 347–356 (PKRRKVSVPK) show a composition bias toward basic residues.

The protein resides in the nucleus. Its subcellular location is the chromosome. Its function is as follows. Plays a key role in meiotic progression by ensuring that sufficient numbers of processed DNA double-strand breaks (DSBs) are available for successful homology search, promoting synaptonemal-complex formation independently and playing key role in the male mid-pachytene checkpoint and the female meiotic prophase checkpoint. This chain is HORMA domain-containing protein 1 (hormad1), found in Danio rerio (Zebrafish).